Reading from the N-terminus, the 471-residue chain is 3-isopropylmalate dehydratase large subunit (471 aa).

[4Fe-4S] cluster contacts are provided by C347, C407, and C410.

This sequence belongs to the aconitase/IPM isomerase family. LeuC type 1 subfamily. As to quaternary structure, heterodimer of LeuC and LeuD. Requires [4Fe-4S] cluster as cofactor.

The enzyme catalyses (2R,3S)-3-isopropylmalate = (2S)-2-isopropylmalate. It functions in the pathway amino-acid biosynthesis; L-leucine biosynthesis; L-leucine from 3-methyl-2-oxobutanoate: step 2/4. Functionally, catalyzes the isomerization between 2-isopropylmalate and 3-isopropylmalate, via the formation of 2-isopropylmaleate. The sequence is that of 3-isopropylmalate dehydratase large subunit from Geobacillus sp. (strain WCH70).